The sequence spans 320 residues: L-lactate dehydrogenase (320 aa).

NAD(+) is bound by residues valine 18, aspartate 39, arginine 44, tyrosine 69, and 83–84 (GA). Glutamine 86 and arginine 92 together coordinate substrate. NAD(+) is bound by residues serine 105, 122 to 124 (AAN), and serine 147. Position 124 to 127 (124 to 127 (NPVD)) interacts with substrate. Position 152-155 (152-155 (DSSR)) interacts with substrate. Catalysis depends on histidine 179, which acts as the Proton acceptor. Tyrosine 223 carries the phosphotyrosine modification. Residue threonine 232 participates in substrate binding.

Belongs to the LDH/MDH superfamily. LDH family. Homotetramer.

It is found in the cytoplasm. The enzyme catalyses (S)-lactate + NAD(+) = pyruvate + NADH + H(+). Its pathway is fermentation; pyruvate fermentation to lactate; (S)-lactate from pyruvate: step 1/1. Its activity is regulated as follows. The quaternary structure is constitutionally similar to the active conformation of allosteric LDHs, and the regulation is independent of the fructose 1,6-bisphosphate-binding site. Functionally, catalyzes the conversion of lactate to pyruvate. The sequence is that of L-lactate dehydrogenase from Lactiplantibacillus pentosus (Lactobacillus pentosus).